Here is a 366-residue protein sequence, read N- to C-terminus: uncharacterized protein (366 aa).

The CP-type G domain maps to 59–222 (LNILHGIGET…LYDTPGIINN (164 aa)).

The protein belongs to the TRAFAC class YlqF/YawG GTPase family.

Binds GTP and GDP. This is an uncharacterized protein from Bacillus subtilis (strain 168).